A 785-amino-acid chain; its full sequence is Probable ATP-dependent RNA helicase ddx17 (785 aa).

Low complexity-rich tracts occupy residues M1–G11, S18–S37, S49–S95, and G105–S177. The segment at M1–S233 is disordered. Positions K178–G191 are enriched in polar residues. Residues P192–S233 show a composition bias toward low complexity. The Q motif motif lies at M384–S412. The Helicase ATP-binding domain maps to W415–V590. A428–T435 contacts ATP. The DEAD box signature appears at D538–D541. Positions N602–S763 constitute a Helicase C-terminal domain. Positions V764–K774 are enriched in polar residues. The disordered stretch occupies residues V764–Y785.

Belongs to the DEAD box helicase family. DDX5/DBP2 subfamily.

It localises to the cytoplasm. Its subcellular location is the nucleus. The catalysed reaction is ATP + H2O = ADP + phosphate + H(+). Functionally, probable ATP-dependent RNA helicase which may be involved nonsense-mediated mRNA decay and ribosome biogenesis through rRNA processing. The protein is Probable ATP-dependent RNA helicase ddx17 (ddx17) of Dictyostelium discoideum (Social amoeba).